Reading from the N-terminus, the 213-residue chain is FMN-dependent NADH:quinone oxidoreductase (213 aa).

17–19 lines the FMN pocket; the sequence is SSS.

The protein belongs to the azoreductase type 1 family. In terms of assembly, homodimer. It depends on FMN as a cofactor.

It carries out the reaction 2 a quinone + NADH + H(+) = 2 a 1,4-benzosemiquinone + NAD(+). It catalyses the reaction N,N-dimethyl-1,4-phenylenediamine + anthranilate + 2 NAD(+) = 2-(4-dimethylaminophenyl)diazenylbenzoate + 2 NADH + 2 H(+). Quinone reductase that provides resistance to thiol-specific stress caused by electrophilic quinones. In terms of biological role, also exhibits azoreductase activity. Catalyzes the reductive cleavage of the azo bond in aromatic azo compounds to the corresponding amines. The sequence is that of FMN-dependent NADH:quinone oxidoreductase from Ruminiclostridium cellulolyticum (strain ATCC 35319 / DSM 5812 / JCM 6584 / H10) (Clostridium cellulolyticum).